Consider the following 700-residue polypeptide: Translation initiation factor IF-2 (700 aa).

The tract at residues 58–85 (KKEVKKQKEPSKEKGKSSEQVKVKEKSK) is disordered. Positions 191-365 (PRPPVVTIMG…EMQEIRCIPD (175 aa)) constitute a tr-type G domain. The interval 200–207 (GHVDHGKT) is G1. 200 to 207 (GHVDHGKT) is a binding site for GTP. Residues 225–229 (GITQS) form a G2 region. The segment at 246–249 (DTPG) is G3. GTP contacts are provided by residues 246–250 (DTPGH) and 300–303 (NKID). Residues 300–303 (NKID) are G4. Residues 337 to 339 (SAK) are G5.

This sequence belongs to the TRAFAC class translation factor GTPase superfamily. Classic translation factor GTPase family. IF-2 subfamily.

It localises to the cytoplasm. Its function is as follows. One of the essential components for the initiation of protein synthesis. Protects formylmethionyl-tRNA from spontaneous hydrolysis and promotes its binding to the 30S ribosomal subunits. Also involved in the hydrolysis of GTP during the formation of the 70S ribosomal complex. This Petrotoga mobilis (strain DSM 10674 / SJ95) protein is Translation initiation factor IF-2.